A 274-amino-acid polypeptide reads, in one-letter code: N-acetylmuramic acid 6-phosphate etherase (274 aa).

Positions 52 to 215 (IIPRMEQGGR…STSIMIRLGR (164 aa)) constitute an SIS domain. Catalysis depends on E80, which acts as the Proton donor. Residue E111 is part of the active site.

This sequence belongs to the GCKR-like family. MurNAc-6-P etherase subfamily. In terms of assembly, homodimer.

The catalysed reaction is N-acetyl-D-muramate 6-phosphate + H2O = N-acetyl-D-glucosamine 6-phosphate + (R)-lactate. It participates in amino-sugar metabolism; N-acetylmuramate degradation. Specifically catalyzes the cleavage of the D-lactyl ether substituent of MurNAc 6-phosphate, producing GlcNAc 6-phosphate and D-lactate. This is N-acetylmuramic acid 6-phosphate etherase from Porphyromonas gingivalis (strain ATCC BAA-308 / W83).